Reading from the N-terminus, the 130-residue chain is MTMKIIQTAQAPAPVGPYNQAIAANGFLFTAGQIALDPQTMTIMGEGNVEVQAKQVLTNLGAVLQEAGCGWENVVKTTVFLKDMNDFAAVNAIYGQYFDEATAPARSCVEVARLPKDVLVEIDCVAVLPT.

Belongs to the RutC family.

The chain is RutC family protein slr0709 from Synechocystis sp. (strain ATCC 27184 / PCC 6803 / Kazusa).